A 355-amino-acid chain; its full sequence is Beta-1,2-mannobiose phosphorylase (355 aa).

Residues asparagine 31, arginine 46, arginine 89, 140–141 (ED), lysine 188, tyrosine 273, and aspartate 333 contribute to the beta-D-Manp-(1-&gt;2)-beta-D-Manp-(1-&gt;2)-D-Manp site.

Belongs to the glycosyl hydrolase 130 family. As to quaternary structure, homodimer.

It carries out the reaction beta-D-mannopyranosyl-(1-&gt;2)-D-mannopyranose + phosphate = alpha-D-mannose 1-phosphate + D-mannose. Catalyzes the reversible phosphorolysis of 1,2-beta-oligomannan. In phosphorolytic reactions, prefers beta-1,2-mannobiose (beta-1,2-Man2) as substrate, but can also use beta-1,2-mannotriose. The sequence is that of Beta-1,2-mannobiose phosphorylase from Listeria innocua serovar 6a (strain ATCC BAA-680 / CLIP 11262).